The sequence spans 816 residues: H(+)/Cl(-) exchange transporter 5 (816 aa).

Topologically, residues 1–124 (MAMWQGAMDN…WALIHSVSDA (124 aa)) are cytoplasmic. 2 consecutive transmembrane segments (helical) span residues 125 to 162 (FSGW…ICTG) and 208 to 231 (VNYF…VKVF). A Selectivity filter part_1 motif is present at residues 237–241 (GSGIP). Ser238 contributes to the chloride binding site. Residues 240–247 (IPEIKTIL) constitute an intramembrane region (helical). Helical transmembrane passes span 256-275 (LGKW…VSSG) and 281-300 (EGPL…HRFN). The short motif at 279–283 (GKEGP) is the Selectivity filter part_2 element. 2 consecutive intramembrane regions (helical) follow at residues 312-324 (VLSA…VSVA) and 328-336 (PIGGVLFSL). A run of 5 helical transmembrane segments spans residues 348-366 (LWRS…RSIN), 389-414 (LVPF…IAWC), 422-442 (LGKY…ILAF), 498-518 (MWQL…TFGM), and 523-542 (GLFI…LGVG). Positions 523–527 (GLFIP) match the Selectivity filter part_3 motif. Residue Phe525 participates in chloride binding. An intramembrane region (helical) is located at residues 570 to 584 (GLYAMVGAAACLGGV). Positions 585-587 (TRM) form an intramembrane region, note=Loop between two helices. An intramembrane region (helical) is located at residues 588-599 (TVSLVVIMFELT). An intramembrane region (note=Loop between two helices) is located at residues 600–604 (GGLEY). The chain crosses the membrane as a helical span at residues 605–622 (IVPLMAAAMTSKWVADAL). At 623–816 (GREGIYDAHI…NQDPDSILFN (194 aa)) the chain is on the cytoplasmic side. Chloride is bound at residue Tyr628. CBS domains lie at 656–720 (MKPR…ARKK) and 752–812 (ILDL…DPDS). ATP is bound by residues Thr666, 687 to 689 (YSG), and 794 to 797 (TKKD).

Belongs to the chloride channel (TC 2.A.49) family. ClC-5/CLCN5 subfamily. Interacts with NEDD4 and NEDD4L. In terms of processing, ubiquitinated by NEDD4L in the presence of albumin; which promotes endocytosis and proteasomal degradation.

It is found in the golgi apparatus membrane. Its subcellular location is the endosome membrane. The protein resides in the cell membrane. The enzyme catalyses 2 chloride(in) + H(+)(out) = 2 chloride(out) + H(+)(in). Proton-coupled chloride transporter. Functions as antiport system and exchanges chloride ions against protons. Important for normal acidification of the endosome lumen. May play an important role in renal tubular function. The CLC channel family contains both chloride channels and proton-coupled anion transporters that exchange chloride or another anion for protons. The absence of conserved gating glutamate residues is typical for family members that function as channels. This is H(+)/Cl(-) exchange transporter 5 (CLCN5) from Oryctolagus cuniculus (Rabbit).